Reading from the N-terminus, the 249-residue chain is Exosome complex component Rrp41 (249 aa).

Belongs to the RNase PH family. Rrp41 subfamily. As to quaternary structure, component of the archaeal exosome complex. Forms a hexameric ring-like arrangement composed of 3 Rrp41-Rrp42 heterodimers. The hexameric ring associates with a trimer of Rrp4 and/or Csl4 subunits.

Its subcellular location is the cytoplasm. Functionally, catalytic component of the exosome, which is a complex involved in RNA degradation. Has 3'-&gt;5' exoribonuclease activity. Can also synthesize heteromeric RNA-tails. The sequence is that of Exosome complex component Rrp41 from Pyrococcus abyssi (strain GE5 / Orsay).